A 352-amino-acid polypeptide reads, in one-letter code: Protein-glutamate methylesterase/protein-glutamine glutaminase 2 (352 aa).

One can recognise a Response regulatory domain in the interval 1 to 116 (MIVDDSAIVR…KDFIQDAASD (116 aa)). Asp50 carries the post-translational modification 4-aspartylphosphate. One can recognise a CheB-type methylesterase domain in the interval 159–351 (SKTTEHVVAI…QEIMRYAHLK (193 aa)). Residues Ser171, His197, and Asp293 contribute to the active site.

The protein belongs to the CheB family. Phosphorylated by CheA. Phosphorylation of the N-terminal regulatory domain activates the methylesterase activity.

It localises to the cytoplasm. It catalyses the reaction [protein]-L-glutamate 5-O-methyl ester + H2O = L-glutamyl-[protein] + methanol + H(+). It carries out the reaction L-glutaminyl-[protein] + H2O = L-glutamyl-[protein] + NH4(+). In terms of biological role, involved in chemotaxis. Part of a chemotaxis signal transduction system that modulates chemotaxis in response to various stimuli. Catalyzes the demethylation of specific methylglutamate residues introduced into the chemoreceptors (methyl-accepting chemotaxis proteins or MCP) by CheR. Also mediates the irreversible deamidation of specific glutamine residues to glutamic acid. This is Protein-glutamate methylesterase/protein-glutamine glutaminase 2 from Shewanella denitrificans (strain OS217 / ATCC BAA-1090 / DSM 15013).